Here is a 399-residue protein sequence, read N- to C-terminus: MAIIHPKVRGFICTTTHPKGCELNVRDQIEATRKLGVREDGPKKVLVIGASSGYGLAARITAAFGFKADTLGVFFEKPGTETKAGTAGWYNAAAFDKFAKAEGLYSKSINGDAFSDEARAKVIELIKNEMGGQVDLVIYSLASPVRKLPQTGEVIRSALKPIGQPYKSTAIDTNKDTIIEASIEPATEQEIADTVTVMGGQDWELWIDALNAAGVLAPQARTVAFSYIGSDITWPIYWHGALGKAKQDLDETAQRLAGKVGGSANVAVLKSVVTQASSAIPVMPLYLSMVFKIMQEKGVHEGTQDQLDRMFRDRMYRADGSPAELDEKGRLRLDDWELRDDVQGACKALWPQVTTENLFELTDYAGYKKQFLNLFGFERADVNYDEDVATEVKFDCVEL.

NAD(+) is bound by residues 49–54, 75–76, 112–113, and 141–142; these read GASSGY, FE, DA, and LA. Tyr227 contacts substrate. The active-site Proton donor is Tyr237. Residues Lys246 and 272–274 each bind NAD(+); that span reads VVT.

It belongs to the TER reductase family. As to quaternary structure, monomer.

It carries out the reaction a 2,3-saturated acyl-[ACP] + NAD(+) = a (2E)-enoyl-[ACP] + NADH + H(+). The protein operates within lipid metabolism; fatty acid biosynthesis. Functionally, involved in the final reduction of the elongation cycle of fatty acid synthesis (FAS II). Catalyzes the reduction of a carbon-carbon double bond in an enoyl moiety that is covalently linked to an acyl carrier protein (ACP). The sequence is that of Enoyl-[acyl-carrier-protein] reductase [NADH] from Pseudomonas putida (strain W619).